The primary structure comprises 319 residues: RNA polymerase II holoenzyme cyclin-like subunit (319 aa).

Residues 53-142 (QQLIRLAKRL…LGECEFFMIS (90 aa)) enclose the Cyclin N-terminal domain. The segment covering 237–251 (QGQQAQGGMPEPAAA) has biased composition (low complexity). The interval 237 to 261 (QGQQAQGGMPEPAAAEPKEKRQQDR) is disordered. Positions 252–261 (EPKEKRQQDR) are enriched in basic and acidic residues.

It belongs to the cyclin family. Cyclin C subfamily. Component of the SRB8-11 complex, a regulatory module of the Mediator complex. Interacts with SSN3/FCK1.

It is found in the nucleus. Its function is as follows. Component of the SRB8-11 complex. The SRB8-11 complex is a regulatory module of the Mediator complex which is itself involved in regulation of basal and activated RNA polymerase II-dependent transcription. The SRB8-11 complex may be involved in the transcriptional repression of a subset of genes regulated by Mediator. It may inhibit the association of the Mediator complex with RNA polymerase II to form the holoenzyme complex. The SRB8-11 complex phosphorylates the C-terminal domain (CTD) of the largest subunit of RNA polymerase II. May play a role in signal transduction pathways regulating secondary metabolism and fungal development (conidiation). This Gibberella moniliformis (Maize ear and stalk rot fungus) protein is RNA polymerase II holoenzyme cyclin-like subunit (SSN8).